Here is a 90-residue protein sequence, read N- to C-terminus: DNA-binding protein HU (90 aa).

Belongs to the bacterial histone-like protein family. As to quaternary structure, homodimer.

Histone-like DNA-binding protein which is capable of wrapping DNA to stabilize it, and thus to prevent its denaturation under extreme environmental conditions. The protein is DNA-binding protein HU (hup) of Staphylococcus aureus (strain COL).